A 3198-amino-acid chain; its full sequence is Helicase domino (3198 aa).

Over residues 1-12 (MNEGNSAGGGHE) the composition is skewed to gly residues. Disordered regions lie at residues 1-27 (MNEG…RVTP), 93-112 (LPQQ…APAH), and 119-148 (SSTI…AASI). Residues 134–143 (QRLDDNEDRT) are compositionally biased toward basic and acidic residues. Residues 187-212 (KKRILQQKLQILRNLKERHLENVSEY) are a coiled coil. Disordered stretches follow at residues 256-350 (TSAA…SATS) and 391-474 (GGTP…TPNS). 2 stretches are compositionally biased toward polar residues: residues 264–281 (QNQK…SSLV) and 297–329 (NISN…TESN). The segment covering 330 to 350 (SSTTVPGTATSGAATSTSATS) has biased composition (low complexity). Residues 391–404 (GGTPLLPCNTSAGS) show a composition bias toward polar residues. Positions 452–464 (PGTPTSGSLLSPA) are enriched in low complexity. Positions 507–579 (LPKLQEPSRP…QELQLKRVAS (73 aa)) constitute an HSA domain. The segment at 635-848 (NKSVADTPSL…DMEEQDEQED (214 aa)) is disordered. Positions 638–650 (VADTPSLNSSRLT) are enriched in polar residues. Basic and acidic residues predominate over residues 652–664 (PKRESDDDFRPES). Phosphoserine is present on residues Ser656, Ser664, and Ser666. Positions 666–696 (SEDDEETIAKAEEDAADVKEEVTALAKESEM) form a coiled coil. Basic and acidic residues-rich tracts occupy residues 672–695 (TIAK…KESE) and 711–721 (ENRDKLMKEEQ). Thr729 is modified (phosphothreonine). Phosphoserine occurs at positions 733, 736, and 744. A coiled-coil region spans residues 741–784 (KEASDDDENTISKQEEAEQEIDHKKEIDELEADNDLSVEQLLAK). The segment covering 753–767 (KQEEAEQEIDHKKEI) has biased composition (basic and acidic residues). Residues 805–831 (LDSDDDSTAVDSTEESEDAATEDEEDL) show a composition bias toward acidic residues. At Thr838 the chain carries Phosphothreonine. Residues 926 to 1091 (VTMNERKLNG…WSLMHFLMPY (166 aa)) enclose the Helicase ATP-binding domain. Position 939–946 (939–946 (DEMGLGKT)) interacts with ATP. The tract at residues 1471 to 1492 (VQKQSIANGKTEPEEETEAEDP) is disordered. One can recognise a Helicase C-terminal domain in the interval 1662 to 1812 (TMDRLLRQLK…DMAIEGGNFT (151 aa)). The disordered stretch occupies residues 1828 to 1856 (EQSEQDESSQEKSENKDRIVATTTLSDTP). Residues 1836-1846 (SQEKSENKDRI) are compositionally biased toward basic and acidic residues. The stretch at 1951–1996 (AAWTAEQLRAAEAELEAQKREWEANRLAAMHKEEELLKQETEAEEM) forms a coiled coil. Residues 2061 to 2100 (KEHKRSRTDAGYDGSRRPNKMRREDNYVPPRSLFDRPTPQ) are disordered. Basic and acidic residues predominate over residues 2067–2086 (RTDAGYDGSRRPNKMRREDN). Residues 2136–2205 (TEPEAMAEWC…QCRWRYETHI (70 aa)) enclose the Myb-like domain. The interval 2318 to 2362 (IREKQRGQQMSQPPVGVGVVQQMQQQSQQQQQPAPPPLPQQQQPQ) is disordered. Low complexity predominate over residues 2325 to 2349 (QQMSQPPVGVGVVQQMQQQSQQQQQ).

This sequence belongs to the SNF2/RAD54 helicase family. SWR1 subfamily. In terms of assembly, component of the Tip60 chromatin-remodeling complex which contains Domino, Tip60, Tra1, Brd8, E(Pc), DMAP1, Pontin, Reptin, Ing3, Act87E, BAP55, Mrg15, MrgBP, Gas41 and YL-1. As to expression, isoform B is present at high levels in ovary, in follicle cells, nurse cells and oocyte. Isoform B is also present in germline and somatic stem cells from the germarium. Isoform A is undetectable in adult ovary (at protein level).

It localises to the nucleus. Mediates the ATP-dependent exchange of unmodified histone H2AV for its phosphorylated and acetylated form H2AVK5acS138ph, leading to transcriptional regulation of selected genes by chromatin remodeling. Involved in Notch signaling. Represses E2F target genes. Required for somatic stem cell self-renewal but not for germline stem cell self-renewal. Involved in oogenesis. This chain is Helicase domino (dom), found in Drosophila melanogaster (Fruit fly).